The following is a 96-amino-acid chain: MREYEAVVLVRPNLEEEALQGVIDKFVNLVPQQGGEVVKVDKWGKRRLQYEVKKFKEAFYFLLNFKGEPAVAQELERVMKISDDIIRFLVVRKDEQ.

Belongs to the bacterial ribosomal protein bS6 family.

Functionally, binds together with bS18 to 16S ribosomal RNA. In Heliobacterium modesticaldum (strain ATCC 51547 / Ice1), this protein is Small ribosomal subunit protein bS6.